Consider the following 499-residue polypeptide: Cytochrome P450 77A1 (499 aa).

Residue cysteine 443 coordinates heme.

Belongs to the cytochrome P450 family. It depends on heme as a cofactor.

In Solanum melongena (Eggplant), this protein is Cytochrome P450 77A1 (CYP77A1).